Consider the following 113-residue polypeptide: Large ribosomal subunit protein uL24 (113 aa).

It belongs to the universal ribosomal protein uL24 family. Part of the 50S ribosomal subunit.

Its function is as follows. One of two assembly initiator proteins, it binds directly to the 5'-end of the 23S rRNA, where it nucleates assembly of the 50S subunit. Functionally, one of the proteins that surrounds the polypeptide exit tunnel on the outside of the subunit. The chain is Large ribosomal subunit protein uL24 from Micrococcus luteus (Micrococcus lysodeikticus).